The primary structure comprises 59 residues: Flagellar basal-body rod protein FlgC (59 aa).

The protein belongs to the flagella basal body rod proteins family. The basal body constitutes a major portion of the flagellar organelle and consists of four rings (L,P,S, and M) mounted on a central rod. The rod consists of about 26 subunits of FlgG in the distal portion, and FlgB, FlgC and FlgF are thought to build up the proximal portion of the rod with about 6 subunits each.

The protein resides in the bacterial flagellum basal body. In Borrelia hermsii, this protein is Flagellar basal-body rod protein FlgC (flgC).